Consider the following 256-residue polypeptide: Nuclear shuttle protein (256 aa).

A Bipartite nuclear localization signal motif is present at residues Y21–S42. The Nuclear localization signal motif lies at Q81–L96. Positions E150 to D187 are interaction with Arabidopsis thaliana NSI protein.

The protein belongs to the begomovirus nuclear shuttle protein family. In terms of assembly, binds to single-stranded and double-stranded viral DNA. Interacts with the host nuclear shuttle interacting (NSI) protein. This interaction may allow NSP to recruit NSI monomers to the viral genome and thus regulate nuclear export of viral genome by NSP.

The protein resides in the host nucleus. The protein localises to the host cytoplasm. Its subcellular location is the host cell membrane. Functionally, binds to the genomic viral ssDNA, shuttles it into and out of the cell nucleus. Begomoviruses use 2 proteins to transport their DNA from cell to cell. The nuclear shuttle protein (NSP) shuttles it between nucleus and cytoplasm and the movement protein (MP) probably transports the DNA-NSP complex to the cell periphery and facilitates movement across the cell wall. The chain is Nuclear shuttle protein from Macroptilium lathyroides (Lima bean).